The following is a 655-amino-acid chain: A-type voltage-gated potassium channel KCND3 (655 aa).

Topologically, residues 1 to 182 (MAAGVAAWLP…FENPHTSTLA (182 aa)) are cytoplasmic. Positions 6 to 21 (AAWLPFARAAAIGWMP) are interaction with KCNIP1 and KCNIP2. The tract at residues 70 to 78 (EKEFFFNED) is interaction with KCNIP1. Positions 104, 110, 131, and 132 each coordinate Zn(2+). Residue S153 is modified to Phosphoserine. Residues 183–204 (LVFYYVTGFFIAVSVITNVVET) traverse the membrane as a helical segment. At 205–223 (VPCGTVPGSKELPCGERYS) the chain is on the extracellular side. Residues 224–246 (VAFFCLDTACVMIFTVEYLLRLF) form a helical membrane-spanning segment. The Cytoplasmic portion of the chain corresponds to 247 to 253 (AAPSRYR). Residues 254 to 277 (FIRSVMSIIDVVAIMPYYIGLVMT) form a helical membrane-spanning segment. The Extracellular portion of the chain corresponds to 278 to 283 (NNEDVS). A helical; Voltage-sensor transmembrane segment spans residues 284–306 (GAFVTLRVFRVFRIFKFSRHSQG). Over 307-318 (LRILGYTLKSCA) the chain is Cytoplasmic. The chain crosses the membrane as a helical span at residues 319–343 (SELGFLLFSLTMAIIIFATVMFYAE). Residues 344–352 (KGSSASKFT) lie on the Extracellular side of the membrane. Positions 353-366 (SIPASFWYTIVTMT) form an intramembrane region, helical. Positions 367, 368, 369, and 370 each coordinate K(+). Residues 367 to 372 (TLGYGD) carry the Selectivity filter motif. An intramembrane segment occupies 367–374 (TLGYGDMV). The helical transmembrane segment at 378-400 (IAGKIFGSICSLSGVLVIALPVP) threads the bilayer. The Cytoplasmic portion of the chain corresponds to 401–655 (VIVSNFSRIY…ASNVVKVSVL (255 aa)). At T459 the chain carries Phosphothreonine. Residues 470–487 (SLIESQHHHLLHCLEKTT) form an interaction with KCNIP1 and KCNIP2 region. The segment at 472–487 (IESQHHHLLHCLEKTT) is mediates dendritic targeting. The residue at position 569 (S569) is a Phosphoserine; by CaMK2D. Residue S585 is modified to Phosphoserine. The interval 618–644 (PAPPALTPEGETRPPPASPGPNTNIPS) is disordered.

The protein belongs to the potassium channel family. D (Shal) (TC 1.A.1.2) subfamily. Kv4.3/KCND3 sub-subfamily. In terms of assembly, homotetramer. Heterotetramer with KCND2. Associates with the regulatory subunits KCNIP3 and KCNIP4. Interacts with KCNE1, KCNE2, SCN1B and KCNAB1 and DLG1. Component of heteromultimeric potassium channels. Identified in potassium channel complexes containing KCND1, KCND2, KCND3, KCNIP1, KCNIP2, KCNIP3, KCNIP4, DPP6 and DPP10. Interacts with KCNIP1; each KCNIP1 monomer interacts with two adjacent KCND3 subunits, through both the N-terminal inactivation ball of a KCND3 subunit and a C-terminal helix from the adjacent KCND3 subunit, clamping them together; this interaction stabilizes the tetrameric form and modulates the channel gating kinetics namely channel activation and inactivation kinetics and rate of recovery from inactivation. Interacts with DPP6; this interaction modulates the channel gating kinetics namely channel activation and inactivation kinetics and rate of recovery from inactivation. Interacts with KCNIP2; each KCNIP2 monomer interacts with two adjacent KCND3 subunits, through both the N-terminal inactivation ball of a KCND3 subunit and a C-terminal helix from the adjacent KCND3 subunit, clamping them together; this interaction modulates the channel gating kinetics. Post-translationally, regulated through phosphorylation at Ser-569 by CaMK2D. In terms of tissue distribution, detected in carotid body chemoreceptor cells and in frontal cortex.

It localises to the cell membrane. The protein localises to the sarcolemma. Its subcellular location is the cell projection. The protein resides in the dendrite. It catalyses the reaction K(+)(in) = K(+)(out). Pore-forming (alpha) subunit of voltage-gated A-type potassium channels that mediates transmembrane potassium transport in excitable membranes, in brain and heart. In cardiomyocytes, may generate the transient outward potassium current I(To). In neurons, may conduct the transient subthreshold somatodendritic A-type potassium current (ISA). Kinetics properties are characterized by fast activation at subthreshold membrane potentials, rapid inactivation, and quick recovery from inactivation. Channel properties are modulated by interactions with regulatory subunits. Interaction with the regulatory subunits KCNIP1 or KCNIP2 modulates the channel gating kinetics namely channel activation and inactivation kinetics and rate of recovery from inactivation. Likewise, interaction with DPP6 modulates the channel gating kinetics namely channel activation and inactivation kinetics. This chain is A-type voltage-gated potassium channel KCND3, found in Oryctolagus cuniculus (Rabbit).